A 449-amino-acid polypeptide reads, in one-letter code: Packaging protein 1 (449 aa).

Over residues 1–10 (MESRGKHRLK) the composition is skewed to basic residues. The segment at 1-64 (MESRGKHRLK…SSNSILHCPP (64 aa)) is disordered. Positions 11–25 (KNGESKENLGEHEQA) are enriched in basic and acidic residues. The segment covering 35 to 59 (SADSLSSPVAEPNFSSPGGRSSNSI) has biased composition (polar residues). An ATP-binding site is contributed by 168-175 (GPTGSGKS). The segment at 437 to 449 (TAYSKKCDKLANK) is DNA-binding.

This sequence belongs to the adenoviridae packaging protein 1 family. As to quaternary structure, homodimer. Part of a genome packaging complex composed of packaging proteins 1, 2 and 3; this complex specifically binds to the packaging sequence on the left end of viral genomic DNA and performs packaging of the viral genome. Interacts with protein 33K.

The protein localises to the virion. It is found in the host nucleus. It localises to the host nucleoplasm. The protein resides in the host nucleolus. Component of the packaging machinery which encapsidates the viral DNA into preformed capsids and transcriptional activator of the viral major late promoter (MLP). Binds, along with packaging proteins 2 and 3, to the specific packaging sequence on the left end of viral genomic DNA and displays ATPase activity thereby providing the power stroke of the packaging machinery. The activity of packaging protein IVa2 is stimulated by protein 33K which acts as a terminase. May be the protein that pumps DNA into the capsid powered by ATP hydrolysis. Specifically binds to the 5'-CG-3' nucleotides of the repeats making up the packaging sequence. Component of the DEF-A and DEF-B transcription factors that bind downstream elements of the major late promoter (MLP), and stimulate transcription from the MLP after initiation of viral DNA replication. DEF-A is a heterodimer packaging proteins 1 and 2 and DEF-B is a homodimer of packaging protein 1. This Mus musculus (Mouse) protein is Packaging protein 1.